The chain runs to 340 residues: DNA-directed RNA polymerase subunit alpha (340 aa).

Residues 1–236 (MLSLSKNWNT…EQLQLFISFE (236 aa)) form an alpha N-terminal domain (alpha-NTD) region. An alpha C-terminal domain (alpha-CTD) region spans residues 251 to 340 (FSPYLLKRVD…LSKRYEDSYN (90 aa)).

The protein belongs to the RNA polymerase alpha chain family. As to quaternary structure, homodimer. The RNAP catalytic core consists of 2 alpha, 1 beta, 1 beta' and 1 omega subunit. When a sigma factor is associated with the core the holoenzyme is formed, which can initiate transcription.

The enzyme catalyses RNA(n) + a ribonucleoside 5'-triphosphate = RNA(n+1) + diphosphate. Functionally, DNA-dependent RNA polymerase catalyzes the transcription of DNA into RNA using the four ribonucleoside triphosphates as substrates. In Rickettsia africae (strain ESF-5), this protein is DNA-directed RNA polymerase subunit alpha.